Here is a 62-residue protein sequence, read N- to C-terminus: Photosystem II reaction center protein Z (62 aa).

The next 2 helical transmembrane spans lie at 8-28 (LIAAFVALSFAMIIGVPVVFS) and 41-61 (WGGAAAWVVLLFVAALASIVV).

Belongs to the PsbZ family. PSII is composed of 1 copy each of membrane proteins PsbA, PsbB, PsbC, PsbD, PsbE, PsbF, PsbH, PsbI, PsbJ, PsbK, PsbL, PsbM, PsbT, PsbX, PsbY, PsbZ, Psb30/Ycf12, peripheral proteins PsbO, CyanoQ (PsbQ), PsbU, PsbV and a large number of cofactors. It forms dimeric complexes.

It localises to the cellular thylakoid membrane. May control the interaction of photosystem II (PSII) cores with the light-harvesting antenna, regulates electron flow through the 2 photosystem reaction centers. PSII is a light-driven water plastoquinone oxidoreductase, using light energy to abstract electrons from H(2)O, generating a proton gradient subsequently used for ATP formation. This is Photosystem II reaction center protein Z from Acaryochloris marina (strain MBIC 11017).